Here is a 594-residue protein sequence, read N- to C-terminus: Solute carrier family 13 member 1 (594 aa).

Helical transmembrane passes span 13–33 (FLLV…IRTK), 40–60 (ILFV…ITAL), 77–97 (VASA…CLAT), 113–133 (VMMV…STAF), and 134–154 (LSMW…VEAV). An N-linked (GlcNAc...) asparagine glycan is attached at N174. A compositionally biased stretch (basic and acidic residues) spans 192–220 (TNEKKEKTKPAPGSSHDKGKVSRKMETEK). The tract at residues 192–226 (TNEKKEKTKPAPGSSHDKGKVSRKMETEKNAVTGA) is disordered. The next 8 membrane-spanning stretches (helical) occupy residues 239–259 (LMCL…ITGT), 283–303 (SWFL…WIWL), 347–367 (IVTL…DPGF), 380–400 (GYVT…LIPA), 461–481 (LSPL…LIVT), 487–507 (ASNP…AEAI), 511–531 (PLQI…LPVA), and 552–572 (AGLG…FTWI). N-linked (GlcNAc...) asparagine glycosylation is present at N590.

It belongs to the SLC13A/DASS transporter (TC 2.A.47) family. NADC subfamily. In terms of tissue distribution, highly expressed in kidney and ileum, detected at lower levels in duodenum/jejunum and colon, and at very low levels in cecum, testis, adrenal and adipose tissues. Expressed in the kidney.

The protein resides in the apical cell membrane. The catalysed reaction is sulfate(out) + 3 Na(+)(out) = sulfate(in) + 3 Na(+)(in). The enzyme catalyses selenate(out) + 3 Na(+)(out) = selenate(in) + 3 Na(+)(in). It catalyses the reaction thiosulfate(out) + 3 Na(+)(out) = thiosulfate(in) + 3 Na(+)(in). In terms of biological role, sodium:sulfate symporter that mediates sulfate reabsorption in the kidney and small intestine. Can also mediate the transport of selenate and thiosulfate. The chain is Solute carrier family 13 member 1 (Slc13a1) from Mus musculus (Mouse).